The chain runs to 266 residues: Undecaprenyl-diphosphatase (266 aa).

A run of 8 helical transmembrane segments spans residues 3–23 (MSLLSIVLLGIVEGVTEFLPV), 41–61 (GTETFDIVIQLGAILAVVVLY), 86–106 (VLVGFLPSAVIGAVAYGAIKA), 108–128 (LNTPIIVAVALILGGIAILVI), 149–171 (FGVGLVQCLSMIPGVSRSGATIM), 184–204 (AEYSFFLAIPTMLGATTLALW), 220–240 (IGFVVSFIVAMLVIRWFLGVV), and 245–265 (FAPFAWYRIIAGTAALIWLLA).

It belongs to the UppP family.

The protein localises to the cell inner membrane. It carries out the reaction di-trans,octa-cis-undecaprenyl diphosphate + H2O = di-trans,octa-cis-undecaprenyl phosphate + phosphate + H(+). Functionally, catalyzes the dephosphorylation of undecaprenyl diphosphate (UPP). Confers resistance to bacitracin. The sequence is that of Undecaprenyl-diphosphatase from Rhizorhabdus wittichii (strain DSM 6014 / CCUG 31198 / JCM 15750 / NBRC 105917 / EY 4224 / RW1) (Sphingomonas wittichii).